A 296-amino-acid polypeptide reads, in one-letter code: Transcription factor Pur-alpha 1 (296 aa).

At Met1 the chain carries N-acetylmethionine. Disordered stretches follow at residues 1 to 25 and 186 to 214; these read MEAN…GGGG and IPGH…EETG. Ser207 carries the post-translational modification Phosphoserine.

The protein belongs to the PUR DNA-binding protein family. As to quaternary structure, homodimer. Interacts with TCP20.

The protein localises to the nucleus. In terms of biological role, transcription factor that specifically binds the purine-rich double-stranded telomeric repeated sequence 5'-AAACCCTAA-3' found in promoter telo boxes. This chain is Transcription factor Pur-alpha 1 (PURA1), found in Arabidopsis thaliana (Mouse-ear cress).